A 248-amino-acid chain; its full sequence is Probable transcriptional regulatory protein Avi_3631 (248 aa).

The protein belongs to the TACO1 family.

It localises to the cytoplasm. The polypeptide is Probable transcriptional regulatory protein Avi_3631 (Allorhizobium ampelinum (strain ATCC BAA-846 / DSM 112012 / S4) (Agrobacterium vitis (strain S4))).